The sequence spans 169 residues: Cell division protein B3 (169 aa).

Part of a cell division machinery. May fulfill a coordination function between the Cdv proteins during cell division. This Sulfolobus acidocaldarius (strain ATCC 33909 / DSM 639 / JCM 8929 / NBRC 15157 / NCIMB 11770) protein is Cell division protein B3.